Reading from the N-terminus, the 352-residue chain is Replication factor C subunit 5 (352 aa).

It belongs to the activator 1 small subunits family. In terms of assembly, heteropentamer of subunits rfc1, rfc2, rfc3, rfc4 and rfc5 that forms a complex with PCNA in the presence of ATP.

The protein resides in the nucleus. In terms of biological role, the elongation of primed DNA templates by DNA polymerase delta and epsilon requires the action of the accessory proteins proliferating cell nuclear antigen (PCNA) and activator 1. This is Replication factor C subunit 5 from Neurospora crassa (strain ATCC 24698 / 74-OR23-1A / CBS 708.71 / DSM 1257 / FGSC 987).